The primary structure comprises 1003 residues: MIFPVTLLAFQWHRRPGGRALSRAAMEVAFRGVRKVLCVAEKNDAAKGIADLLSNGRMRRKEGLSKFNKIYEFDYHLYGQNVTMIMTSVSGHLLAHDFQMQFRKWQSCNPLVLFEAEIEKYCPENFIDIKKTLERETHHCQALVIWTDCDREGENIGFEIIHVCKAVKPNLRVLRARFSEITPHAVRTACENLTEPDQRVSDAVDVRQELDLRIGAAFTRFQTLRLQRIFPEVLAEQLISYGSCQFPTLGFVVERFKAIQAFVPEVFHKIKVTHDHKDGTVEFNWKRYRLFNHTACLVLYQLCMEDPMATVVEVRSKPKSKWRPQALDTVELEKLASRKLRINAKETMRIAEKLYTQGYISYPRTETNIFPKDLNLVALVEQQTVDPHWGAFAQTILERGGPTPRNGSKSDQAHPPIHPTKYTSGLQGDDRRLYEFIVRHFLACCSQDAQGQETTVEIDIAQERFVAHGLIILARNYLDVYPYDHWSDKLLPVYEQGSHFQPSTVEMVDGETSPPQLLTEADLIALMEKHGIGTDATHAEHIETIKARMYVGLTSDKRFLPGHLGMGLVEGYDSMGYEMSKPDLRAELEADLKLICEGKKDKFQVLRQQVQKYKQVFIEAVAKAKKLDEALSQYLGERTEMAQQEEIYPAMPEPVRKCPQCNKDMVLKTKKSGGFYLSCMGFPECRSAVWFPDSVLEASRDNSVCSVCQPPPVYRLKLKFKRGSLPPAMPLEFVGCIGGCDETLKEIFGLRFPRALPRASQPSGHLQASQALNRMDSSQHNLSQPLVNRHTRPSKTVAQALLPPTTAGESNSVTCNCGREAVLLTVRKQGPNQGRHFYKCSNGDCNFFLWADSSHSTGGGTPTSASGPPGSSVGCPSSVGSHMDGFGSLGSDSDGGTPCLCGQPAVTRTVQKDGPNKGRQFHTCAKPREQQCGFFQWVDENVAPGSFAAPAWPGGRGKAQRPEAASKRPRAGSSDAGSTVKKPRKCSLCHQPGHTRTFCPQNR.

Residues 35-179 (KVLCVAEKND…NLRVLRARFS (145 aa)) form the Toprim domain. One can recognise a Topo IA-type catalytic domain in the interval 197-617 (DQRVSDAVDV…QQVQKYKQVF (421 aa)). Residue Tyr362 is the O-(5'-phospho-DNA)-tyrosine intermediate of the active site. Positions 400–426 (GGPTPRNGSKSDQAHPPIHPTKYTSGL) are disordered. The segment at 658–685 (CPQCNKDMVLKTKKSGGFYLSCMGFPEC) adopts a C4-type zinc-finger fold. Zn(2+) contacts are provided by Cys815, Cys817, Cys840, and Cys845. The segment at 815–854 (CNCGREAVLLTVRKQGPNQGRHFYKCSNGDCNFFLWADSS) adopts a GRF-type 1 zinc-finger fold. Residues 856–888 (STGGGTPTSASGPPGSSVGCPSSVGSHMDGFGS) form a disordered region. Over residues 862–888 (PTSASGPPGSSVGCPSSVGSHMDGFGS) the composition is skewed to low complexity. Zn(2+)-binding residues include Cys899, Cys901, Cys924, and Cys932. Residues 899 to 941 (CLCGQPAVTRTVQKDGPNKGRQFHTCAKPREQQCGFFQWVDEN) form a GRF-type 2 zinc finger. The disordered stretch occupies residues 946–991 (SFAAPAWPGGRGKAQRPEAASKRPRAGSSDAGSTVKKPRKCSLCHQ).

Belongs to the type IA topoisomerase family. In terms of assembly, binds ssDNA. Interacts (via N-terminal region) with BLM; the interaction is direct. Directly interacts with RMI1. Component of the RMI complex, containing at least TOP3A, RMI1 and RMI2. The RMI complex interacts with BLM. Requires Mg(2+) as cofactor. Highly expressed in testis.

It localises to the mitochondrion matrix. The enzyme catalyses ATP-independent breakage of single-stranded DNA, followed by passage and rejoining.. Functionally, releases the supercoiling and torsional tension of DNA introduced during the DNA replication and transcription by transiently cleaving and rejoining one strand of the DNA duplex. Introduces a single-strand break via transesterification at a target site in duplex DNA. The scissile phosphodiester is attacked by the catalytic tyrosine of the enzyme, resulting in the formation of a DNA-(5'-phosphotyrosyl)-enzyme intermediate and the expulsion of a 3'-OH DNA strand. The free DNA strand then undergoes passage around the unbroken strand thus removing DNA supercoils. Finally, in the religation step, the DNA 3'-OH attacks the covalent intermediate to expel the active-site tyrosine and restore the DNA phosphodiester backbone. As an essential component of the RMI complex it is involved in chromosome separation and the processing of homologous recombination intermediates to limit DNA crossover formation in cells. Has DNA decatenation activity. It is required for mtDNA decatenation and segregation after completion of replication, in a process that does not require BLM, RMI1 and RMI2. The protein is DNA topoisomerase 3-alpha (Top3a) of Mus musculus (Mouse).